We begin with the raw amino-acid sequence, 948 residues long: ATPase 8, plasma membrane-type (948 aa).

The Cytoplasmic portion of the chain corresponds to 1–64; sequence MATEFSWDEI…EKSENKFLKF (64 aa). A helical membrane pass occupies residues 65–84; the sequence is LGFMWNPLSWVMESAAIMAI. Over 85–96 the chain is Extracellular; that stretch reads VLANGGGKAPDW. Residues 97 to 117 traverse the membrane as a helical segment; the sequence is QDFIGIMVLLIINSTISFIEE. The Cytoplasmic segment spans residues 118–246; that stretch reads NNAGNAAAAL…GHFQKVLTSI (129 aa). Residues 247–267 form a helical membrane-spanning segment; sequence GNFCICSIGLGMLIEILIMYP. The Extracellular portion of the chain corresponds to 268–276; that stretch reads IQHRTYRDG. A helical membrane pass occupies residues 277-294; sequence IDNLLVLLIGGIPIAMPT. The Cytoplasmic segment spans residues 295-646; that stretch reads VLSVTMAIGS…TSRAIFQRMK (352 aa). The active-site 4-aspartylphosphate intermediate is Asp332. Residues Asp591 and Asp595 each coordinate Mg(2+). A helical membrane pass occupies residues 647 to 668; that stretch reads NYTIYAVSITIRIVLGFMLVAL. Topologically, residues 669–673 are extracellular; sequence IWRFD. Residues 674-696 form a helical membrane-spanning segment; that stretch reads FAPFMVLIIAILNDGTIMTISKD. Residues 697–712 lie on the Cytoplasmic side of the membrane; that stretch reads RVKPSPVPDSWKLNEI. A helical transmembrane segment spans residues 713–733; it reads FATGVVLGTYMALTTVLFFWL. The Extracellular segment spans residues 734 to 754; it reads AHDTDFFSKTFGVRSIQGNEE. The helical transmembrane segment at 755–775 threads the bilayer; the sequence is ELMAALYLQVSIISQALIFVT. Residues 776–787 lie on the Cytoplasmic side of the membrane; it reads RSRSWSFVERPG. A helical membrane pass occupies residues 788-808; the sequence is FLLLIAFVIAQLVATLIAVYA. Topologically, residues 809–816 are extracellular; it reads NWGFARIV. Residues 817-837 form a helical membrane-spanning segment; it reads GCGWGWAGGIWVYSIITYIPL. Residues 838–948 are Cytoplasmic-facing; sequence DILKFIIRYA…IDTIQQHYTV (111 aa). Thr884 is modified (phosphothreonine). Position 930 is a phosphoserine (Ser930). Residues 946–948 form an interaction with 14-3-3 proteins region; the sequence is YTV. Thr947 carries the post-translational modification Phosphothreonine.

The protein belongs to the cation transport ATPase (P-type) (TC 3.A.3) family. Type IIIA subfamily. As to quaternary structure, binds to 14-3-3 proteins. The binding is induced by phosphorylation of Thr-947. Binding to 14-3-3 proteins activates the H(+)-ATPase. As to expression, expressed in guard cells, roots and leaves, and barely in mesophyll cells.

The protein localises to the membrane. It carries out the reaction ATP + H2O + H(+)(in) = ADP + phosphate + 2 H(+)(out). Its function is as follows. The plasma membrane H(+) ATPase of plants and fungi generates a proton gradient that drives the active transport of nutrients by H(+)-symport. The resulting external acidification and/or internal alkinization may mediate growth responses. This is ATPase 8, plasma membrane-type (AHA8) from Arabidopsis thaliana (Mouse-ear cress).